A 148-amino-acid chain; its full sequence is Large ribosomal subunit protein uL13 (148 aa).

Basic and acidic residues-rich tracts occupy residues 71–81 (GKKEKQKEYHE) and 89–99 (DHSHSPEEMRA). 2 disordered regions span residues 71 to 99 (GKKE…EMRA) and 125 to 148 (KKLK…LDNA).

This sequence belongs to the universal ribosomal protein uL13 family. As to quaternary structure, part of the 50S ribosomal subunit.

This protein is one of the early assembly proteins of the 50S ribosomal subunit, although it is not seen to bind rRNA by itself. It is important during the early stages of 50S assembly. This chain is Large ribosomal subunit protein uL13, found in Salinibacter ruber (strain DSM 13855 / M31).